A 559-amino-acid chain; its full sequence is Glutamine--tRNA ligase (559 aa).

Residues 44–54 carry the 'HIGH' region motif; the sequence is PEPNGYLHIGH. Residues 45–47 and 51–57 each bind ATP; these read EPN and HIGHAKS. L-glutamine is bound by residues Asp77 and Tyr222. Residues Thr241 and 272–273 contribute to the ATP site; that span reads RL. The short motif at 279-283 is the 'KMSKS' region element; sequence LTSKR.

This sequence belongs to the class-I aminoacyl-tRNA synthetase family. As to quaternary structure, monomer.

The protein localises to the cytoplasm. It carries out the reaction tRNA(Gln) + L-glutamine + ATP = L-glutaminyl-tRNA(Gln) + AMP + diphosphate. The chain is Glutamine--tRNA ligase from Pasteurella multocida (strain Pm70).